The chain runs to 727 residues: Glycerol-3-phosphate dehydrogenase, mitochondrial (727 aa).

Residues 1–42 (MAFQKAVKGTILVGGGALATVLGLSHFAHYKRKQVNLAFVEA) constitute a mitochondrion transit peptide. FAD is bound at residue 71–99 (DVLVIGGGATGSGCALDAVTRGLKTALVE). Phosphotyrosine is present on tyrosine 601. EF-hand domains lie at 623-658 (SDID…IGVQ) and 659-694 (MDEN…IQKG). Residues aspartate 672, asparagine 674, asparagine 676, glutamine 678, and glutamate 683 each coordinate Ca(2+).

This sequence belongs to the FAD-dependent glycerol-3-phosphate dehydrogenase family. FAD is required as a cofactor.

The protein localises to the mitochondrion. It carries out the reaction a quinone + sn-glycerol 3-phosphate = dihydroxyacetone phosphate + a quinol. Its pathway is polyol metabolism; glycerol degradation via glycerol kinase pathway; glycerone phosphate from sn-glycerol 3-phosphate (aerobic route): step 1/1. With respect to regulation, calcium-binding enhance the activity of the enzyme. Its function is as follows. Calcium-responsive mitochondrial glycerol-3-phosphate dehydrogenase which seems to be a key component of the pancreatic beta-cell glucose-sensing device. This chain is Glycerol-3-phosphate dehydrogenase, mitochondrial (GPD2), found in Bos taurus (Bovine).